The primary structure comprises 416 residues: Enterobactin exporter EntS (416 aa).

The Cytoplasmic portion of the chain corresponds to 1–21; the sequence is MNKQSWLLNLSLLKTHPAFRA. Residues 22-42 form a helical membrane-spanning segment; that stretch reads VFLARFISIVSLGLLGVAVPV. Topologically, residues 43–55 are periplasmic; that stretch reads QIQMMTHSTWLVG. Residues 56–76 traverse the membrane as a helical segment; that stretch reads LSVTLTGGAMFVGLMVGGVLA. Residues 77-83 are Cytoplasmic-facing; that stretch reads DRYERKK. A helical transmembrane segment spans residues 84–104; it reads VILLARGTCGIGFIGLCLNAL. The Periplasmic portion of the chain corresponds to 105 to 109; that stretch reads LPEPS. A helical transmembrane segment spans residues 110-130; that stretch reads LLAIYLLGLWDGFFASLGVTA. Residues 131–156 lie on the Cytoplasmic side of the membrane; sequence LLAATPALVGRENLMQAGAITMLTVR. Residues 157–177 traverse the membrane as a helical segment; sequence LGSVISPMIGGLLLATGGVAW. Residue Asn-178 is a topological domain, periplasmic. A helical transmembrane segment spans residues 179-199; the sequence is YGLAAAGTFITLLPLLSLPAL. Over 200 to 218 the chain is Cytoplasmic; it reads PPPPQPREHPLKSLLAGFR. A helical membrane pass occupies residues 219–239; the sequence is FLLASPLVGGIALLGGLLTMA. Topologically, residues 240–256 are periplasmic; sequence SAVRVLYPALADNWQMS. Residues 257 to 277 form a helical membrane-spanning segment; that stretch reads AAEIGFLYAAIPLGAAIGALT. The Cytoplasmic portion of the chain corresponds to 278–287; the sequence is SGKLAHSARP. A helical membrane pass occupies residues 288–307; that stretch reads GLLMLLSTLGSFLAIGLFGL. The Periplasmic segment spans residues 308–313; the sequence is MPMWIL. A helical transmembrane segment spans residues 314–336; the sequence is GVVCLALFGWLSAVSSLLQYTML. Over 337–356 the chain is Cytoplasmic; sequence QTQTPEAMLGRINGLWTAQN. The helical transmembrane segment at 357–377 threads the bilayer; the sequence is VTGDAIGAALLGGLGAMMTPV. A topological domain (periplasmic) is located at residue Ala-378. Residues 379–399 traverse the membrane as a helical segment; the sequence is SASASGFGLLIIGVLLLLVLV. The Cytoplasmic portion of the chain corresponds to 400-416; the sequence is ELRRFRQTPPQVTASDS.

It belongs to the major facilitator superfamily. EntS (TC 2.A.1.38) family.

Its subcellular location is the cell inner membrane. Component of an export pathway for enterobactin. The polypeptide is Enterobactin exporter EntS (Shigella boydii serotype 4 (strain Sb227)).